The chain runs to 343 residues: Aspartate beta-hydroxylase domain-containing protein 2 (343 aa).

Residues 1-31 lie on the Cytoplasmic side of the membrane; that stretch reads MWLEWLVAWSWSLDGLRDCIATGIQSVRDCD. A helical transmembrane segment spans residues 32-52; the sequence is GTAVITVACLLVLFVWYCYHV. At 53–343 the chain is on the lumenal side; that stretch reads GREQPRPHVS…ALDFIFAPGR (291 aa). N-linked (GlcNAc...) asparagine glycans are attached at residues N77 and N185. 2-oxoglutarate contacts are provided by W202 and S246. A Fe cation-binding site is contributed by H257. 266 to 268 provides a ligand contact to 2-oxoglutarate; the sequence is RCH. H302 provides a ligand contact to Fe cation. R315 lines the 2-oxoglutarate pocket.

This sequence belongs to the aspartyl/asparaginyl beta-hydroxylase family. Fe cation is required as a cofactor.

It is found in the membrane. In terms of biological role, may function as 2-oxoglutarate-dependent dioxygenase. The sequence is that of Aspartate beta-hydroxylase domain-containing protein 2 (Asphd2) from Rattus norvegicus (Rat).